The sequence spans 583 residues: Scarecrow-like protein 30 (583 aa).

2 disordered regions span residues 107 to 154 (GDLE…RKSK) and 182 to 205 (EATE…KSDQ). A compositionally biased stretch (polar residues) spans 115–124 (GNFSSITSLH). Residues 131–140 (ESTRRYRHRD) show a composition bias toward basic and acidic residues. Residues 200-579 (QQKSDQPVDM…RVLYAVSCWK (380 aa)) enclose the GRAS domain. Residues 207 to 266 (VDMRNLLMQCAQAVASFDQRRAFEKLKEIREHSSRHGDATQRLGYHFAEALEARITGTMT) are leucine repeat I (LRI). The segment at 285 to 350 (YKGFVQACPT…IGPPLLRVTG (66 aa)) is VHIID. Positions 316–320 (LHIID) match the VHIID motif. A leucine repeat II (LRII) region spans residues 366 to 398 (ETGRRLKRFCDKFNVPFEYSFIAKNWENITLDD). The interval 407–501 (TVVNCILRLQ…RELIIRDAMS (95 aa)) is PFYRE. The tract at residues 504–579 (ACEGSERFAR…RVLYAVSCWK (76 aa)) is SAW.

Belongs to the GRAS family. In terms of assembly, interacts with SNRNP35 and CYP95. As to expression, expressed in seedlings, leaves, sepals, stamen and pistil, and in the quiescent center of root meristem.

It is found in the nucleus. Functionally, probable transcription factor involved in plant development. In Arabidopsis thaliana (Mouse-ear cress), this protein is Scarecrow-like protein 30 (SCL30).